A 454-amino-acid polypeptide reads, in one-letter code: Peroxisome assembly protein 10 (454 aa).

Residues 1-23 lie on the Peroxisomal matrix side of the membrane; it reads MATQPPPARPPPPLTSSPYPYAA. A helical membrane pass occupies residues 24 to 53; sequence APDIIRAHQKDAYFQGVLANRLSDLHRRLR. A topological domain (cytoplasmic) is located at residue Gly-54. Residues 55-76 form a helical membrane-spanning segment; that stretch reads ARSAHAWAAETRTFAAALYLCL. The Peroxisomal matrix portion of the chain corresponds to 77–132; it reads TTLLGNRTLGEEYCDLVQVEEAPSKLFASSSSKAADDHIYENGLGGGGDGGPLLPS. Residues 133–165 traverse the membrane as a helical segment; sequence LPRRAGYILTAIVLPHLASRALPSVRSAIRKRL. Topologically, residues 166-201 are cytoplasmic; it reads QSRLATLSRRRQQTGTKSGSGRGGRGGGGGITEYRV. The interval 171–194 is disordered; that stretch reads TLSRRRQQTGTKSGSGRGGRGGGG. Gly residues predominate over residues 183-194; it reads SGSGRGGRGGGG. Residues 202–229 traverse the membrane as a helical segment; the sequence is LRYLLTHLTPLTSGAHFRAATLAVFYFT. Topologically, residues 230-276 are peroxisomal matrix; the sequence is GAYYELSKWVWGLRYVFTTRAGRVVDDDHNRHHHSPQHGGGNGGRAG. Residues 277 to 296 form a helical membrane-spanning segment; it reads YEVLGVLLVVQMAVRAWLHV. At 297-454 the chain is on the cytoplasmic side; sequence REQLSSGSVA…VQHILPLRAA (158 aa). A disordered region spans residues 302 to 329; the sequence is SGSVAGGGGEEEEDGEDGFRERTAFGPG. Zn(2+)-binding residues include Cys-402, Cys-405, Cys-417, His-419, Cys-422, Cys-425, Cys-436, and Cys-439. The RING-type zinc finger occupies 402-440; the sequence is CTLCLEELKDPAATQCGHVFCWACIGDWVREKPECPLCR.

It belongs to the pex2/pex10/pex12 family. Component of the PEX2-PEX10-PEX12 retrotranslocation channel, composed of PEX2, PEX10 and PEX12.

It localises to the peroxisome membrane. It catalyses the reaction S-ubiquitinyl-[E2 ubiquitin-conjugating enzyme]-L-cysteine + [acceptor protein]-L-lysine = [E2 ubiquitin-conjugating enzyme]-L-cysteine + N(6)-ubiquitinyl-[acceptor protein]-L-lysine.. The protein operates within protein modification; protein ubiquitination. The E3 ubiquitin-protein ligase activity is stimulated by PEX12. In terms of biological role, E3 ubiquitin-protein ligase component of a retrotranslocation channel required for peroxisome organization by mediating export of the PEX5 receptor from peroxisomes to the cytosol, thereby promoting PEX5 recycling. The retrotranslocation channel is composed of PEX2, PEX10 and PEX12; each subunit contributing transmembrane segments that coassemble into an open channel that specifically allows the passage of PEX5 through the peroxisomal membrane. PEX10 also regulates PEX5 recycling by acting as a E3 ubiquitin-protein ligase. When PEX5 recycling is compromised, PEX10 catalyzes polyubiquitination of PEX5 during its passage through the retrotranslocation channel, leading to its degradation. The chain is Peroxisome assembly protein 10 from Thermothelomyces thermophilus (strain ATCC 42464 / BCRC 31852 / DSM 1799) (Sporotrichum thermophile).